Reading from the N-terminus, the 406-residue chain is Dual-specificity RNA methyltransferase RlmN (406 aa).

Glu-119 serves as the catalytic Proton acceptor. The Radical SAM core domain occupies 125–370; that stretch reads DKGRGTLCVS…AMVRRTRGDD (246 aa). Cys-132 and Cys-375 are joined by a disulfide. The [4Fe-4S] cluster site is built by Cys-139, Cys-143, and Cys-146. S-adenosyl-L-methionine contacts are provided by residues 192–193, Ser-224, 246–248, and Asn-332; these read GE and SLH. The active-site S-methylcysteine intermediate is Cys-375.

The protein belongs to the radical SAM superfamily. RlmN family. [4Fe-4S] cluster is required as a cofactor.

The protein resides in the cytoplasm. It catalyses the reaction adenosine(2503) in 23S rRNA + 2 reduced [2Fe-2S]-[ferredoxin] + 2 S-adenosyl-L-methionine = 2-methyladenosine(2503) in 23S rRNA + 5'-deoxyadenosine + L-methionine + 2 oxidized [2Fe-2S]-[ferredoxin] + S-adenosyl-L-homocysteine. It carries out the reaction adenosine(37) in tRNA + 2 reduced [2Fe-2S]-[ferredoxin] + 2 S-adenosyl-L-methionine = 2-methyladenosine(37) in tRNA + 5'-deoxyadenosine + L-methionine + 2 oxidized [2Fe-2S]-[ferredoxin] + S-adenosyl-L-homocysteine. Specifically methylates position 2 of adenine 2503 in 23S rRNA and position 2 of adenine 37 in tRNAs. m2A2503 modification seems to play a crucial role in the proofreading step occurring at the peptidyl transferase center and thus would serve to optimize ribosomal fidelity. The sequence is that of Dual-specificity RNA methyltransferase RlmN from Xylella fastidiosa (strain M12).